The following is a 339-amino-acid chain: DNA-directed RNA polymerase subunit alpha (339 aa).

The alpha N-terminal domain (alpha-NTD) stretch occupies residues 1–233; the sequence is MVREEVAGST…DLFLPFLHAE (233 aa). The tract at residues 264 to 339 is alpha C-terminal domain (alpha-CTD); the sequence is KKGIPLNCIF…IDLLKNKLSF (76 aa).

It belongs to the RNA polymerase alpha chain family. In terms of assembly, in plastids the minimal PEP RNA polymerase catalytic core is composed of four subunits: alpha, beta, beta', and beta''. When a (nuclear-encoded) sigma factor is associated with the core the holoenzyme is formed, which can initiate transcription.

It is found in the plastid. The protein resides in the chloroplast. It catalyses the reaction RNA(n) + a ribonucleoside 5'-triphosphate = RNA(n+1) + diphosphate. Functionally, DNA-dependent RNA polymerase catalyzes the transcription of DNA into RNA using the four ribonucleoside triphosphates as substrates. This chain is DNA-directed RNA polymerase subunit alpha, found in Agropyron cristatum (Crested wheatgrass).